A 454-amino-acid chain; its full sequence is Flavonoid 3-O-glucosyltransferase (454 aa).

Thr25 contacts UDP. The Proton acceptor role is filled by His26. A myricetin-binding site is contributed by Arg89. Residue Asp124 is the Charge relay of the active site. Myricetin is bound by residues His155, Glu192, and Phe202. UDP contacts are provided by Ser282, Ser308, Trp334, and Ala335. UDP-alpha-D-glucose is bound by residues Ala335, Gln337, His352, Trp355, Asn356, Ser357, and Glu360. Position 352 (His352) interacts with UDP. Positions 356, 357, and 360 each coordinate UDP. Gly375 contributes to the myricetin binding site. Residues Asp376 and Gln377 each contribute to the UDP-alpha-D-glucose site.

It belongs to the UDP-glycosyltransferase family. In terms of tissue distribution, highly expressed in flower buds, flowers and pods. Lower expression in leaves, petioles and stems.

It functions in the pathway secondary metabolite biosynthesis; flavonoid biosynthesis. In terms of biological role, catalyzes the glycosylation of flavonoids at the 3-O-position. Glycosylates the 7-O-position if the 3-O-position is not available. Also able to perform 3-O-glycosylation of anthocyanidins. In Medicago truncatula (Barrel medic), this protein is Flavonoid 3-O-glucosyltransferase (UGT78G1).